Reading from the N-terminus, the 238-residue chain is Ribonuclease PH (238 aa).

Phosphate is bound by residues Arg-86 and Gly-124–Arg-126.

This sequence belongs to the RNase PH family. As to quaternary structure, homohexameric ring arranged as a trimer of dimers.

The catalysed reaction is tRNA(n+1) + phosphate = tRNA(n) + a ribonucleoside 5'-diphosphate. Functionally, phosphorolytic 3'-5' exoribonuclease that plays an important role in tRNA 3'-end maturation. Removes nucleotide residues following the 3'-CCA terminus of tRNAs; can also add nucleotides to the ends of RNA molecules by using nucleoside diphosphates as substrates, but this may not be physiologically important. Probably plays a role in initiation of 16S rRNA degradation (leading to ribosome degradation) during starvation. This chain is Ribonuclease PH, found in Brucella anthropi (strain ATCC 49188 / DSM 6882 / CCUG 24695 / JCM 21032 / LMG 3331 / NBRC 15819 / NCTC 12168 / Alc 37) (Ochrobactrum anthropi).